The chain runs to 80 residues: MKPEIHPTYQKVVFMDTSTGFKFLTGSTRGSSETIEWEDGNTYPLIKVEISSDSHPFYTGKQKLADAGGRVDRFKKKYNL.

Belongs to the bacterial ribosomal protein bL31 family. Type B subfamily. In terms of assembly, part of the 50S ribosomal subunit.

This chain is Large ribosomal subunit protein bL31B, found in Shouchella clausii (strain KSM-K16) (Alkalihalobacillus clausii).